The primary structure comprises 135 residues: Ribosome-binding factor A (135 aa).

It belongs to the RbfA family. As to quaternary structure, monomer. Binds 30S ribosomal subunits, but not 50S ribosomal subunits or 70S ribosomes.

The protein resides in the cytoplasm. Functionally, one of several proteins that assist in the late maturation steps of the functional core of the 30S ribosomal subunit. Associates with free 30S ribosomal subunits (but not with 30S subunits that are part of 70S ribosomes or polysomes). Required for efficient processing of 16S rRNA. May interact with the 5'-terminal helix region of 16S rRNA. The polypeptide is Ribosome-binding factor A (Hahella chejuensis (strain KCTC 2396)).